We begin with the raw amino-acid sequence, 102 residues long: Small ribosomal subunit protein uS10 (102 aa).

This sequence belongs to the universal ribosomal protein uS10 family. As to quaternary structure, part of the 30S ribosomal subunit.

In terms of biological role, involved in the binding of tRNA to the ribosomes. The sequence is that of Small ribosomal subunit protein uS10 from Thiobacillus denitrificans (strain ATCC 25259 / T1).